We begin with the raw amino-acid sequence, 379 residues long: Tetraacyldisaccharide 4'-kinase (379 aa).

Residue 63-70 coordinates ATP; that stretch reads AVGGAGKT.

The protein belongs to the LpxK family.

The enzyme catalyses a lipid A disaccharide + ATP = a lipid IVA + ADP + H(+). It participates in glycolipid biosynthesis; lipid IV(A) biosynthesis; lipid IV(A) from (3R)-3-hydroxytetradecanoyl-[acyl-carrier-protein] and UDP-N-acetyl-alpha-D-glucosamine: step 6/6. Its function is as follows. Transfers the gamma-phosphate of ATP to the 4'-position of a tetraacyldisaccharide 1-phosphate intermediate (termed DS-1-P) to form tetraacyldisaccharide 1,4'-bis-phosphate (lipid IVA). The chain is Tetraacyldisaccharide 4'-kinase from Anaeromyxobacter dehalogenans (strain 2CP-1 / ATCC BAA-258).